Here is a 101-residue protein sequence, read N- to C-terminus: Urease subunit beta 1 (101 aa).

The protein belongs to the urease beta subunit family. In terms of assembly, heterotrimer of UreA (gamma), UreB (beta) and UreC (alpha) subunits. Three heterotrimers associate to form the active enzyme.

It is found in the cytoplasm. The catalysed reaction is urea + 2 H2O + H(+) = hydrogencarbonate + 2 NH4(+). Its pathway is nitrogen metabolism; urea degradation; CO(2) and NH(3) from urea (urease route): step 1/1. Functionally, disruption of the ure1 gene cluster suggests that it protects brucellae during their passage through the stomach. The major route of infection in human brucellosis is oral. The protein is Urease subunit beta 1 of Brucella abortus (strain 2308).